Consider the following 238-residue polypeptide: Sugar fermentation stimulation protein homolog (238 aa).

The protein belongs to the SfsA family.

The polypeptide is Sugar fermentation stimulation protein homolog (Bartonella tribocorum (strain CIP 105476 / IBS 506)).